The primary structure comprises 209 residues: Ribonuclease HII (209 aa).

One can recognise an RNase H type-2 domain in the interval C19 to K209. Residues D25, E26, and D118 each coordinate a divalent metal cation.

The protein belongs to the RNase HII family. Mn(2+) is required as a cofactor. It depends on Mg(2+) as a cofactor.

It is found in the cytoplasm. It carries out the reaction Endonucleolytic cleavage to 5'-phosphomonoester.. Endonuclease that specifically degrades the RNA of RNA-DNA hybrids. The polypeptide is Ribonuclease HII (Ehrlichia canis (strain Jake)).